The following is a 395-amino-acid chain: Flavohemoprotein (395 aa).

Positions 1 to 136 (MLDQQTIATI…LANVFIQRES (136 aa)) constitute a Globin domain. H85 is a binding site for heme b. Catalysis depends on charge relay system residues Y95 and E135. Residues 147–395 (GGWHGIRPFR…YECFGPHKVI (249 aa)) form a reductase region. One can recognise an FAD-binding FR-type domain in the interval 150 to 255 (HGIRPFRIVA…AAPHGDFYLE (106 aa)). Residues Y188 and 204-207 (RQYS) each bind FAD. 268 to 273 (GVGQTP) contributes to the NADP(+) binding site. 388-391 (CFGP) provides a ligand contact to FAD.

It belongs to the globin family. Two-domain flavohemoproteins subfamily. The protein in the C-terminal section; belongs to the flavoprotein pyridine nucleotide cytochrome reductase family. It depends on heme b as a cofactor. FAD serves as cofactor.

Its subcellular location is the cytoplasm. It carries out the reaction 2 nitric oxide + NADPH + 2 O2 = 2 nitrate + NADP(+) + H(+). The enzyme catalyses 2 nitric oxide + NADH + 2 O2 = 2 nitrate + NAD(+) + H(+). Functionally, is involved in NO detoxification in an aerobic process, termed nitric oxide dioxygenase (NOD) reaction that utilizes O(2) and NAD(P)H to convert NO to nitrate, which protects the bacterium from various noxious nitrogen compounds. Therefore, plays a central role in the inducible response to nitrosative stress. This is Flavohemoprotein (hmp) from Dickeya dadantii (strain 3937) (Erwinia chrysanthemi (strain 3937)).